The chain runs to 550 residues: Methionine--tRNA ligase (550 aa).

A 'HIGH' region motif is present at residues 14-24 (PYANGSLHIGH). Residues Cys145, Cys148, Cys158, and Cys161 each coordinate Zn(2+). A 'KMSKS' region motif is present at residues 331–335 (KMSKS). Lys334 contributes to the ATP binding site.

It belongs to the class-I aminoacyl-tRNA synthetase family. MetG type 1 subfamily. In terms of assembly, monomer. It depends on Zn(2+) as a cofactor.

The protein resides in the cytoplasm. It carries out the reaction tRNA(Met) + L-methionine + ATP = L-methionyl-tRNA(Met) + AMP + diphosphate. Functionally, is required not only for elongation of protein synthesis but also for the initiation of all mRNA translation through initiator tRNA(fMet) aminoacylation. The sequence is that of Methionine--tRNA ligase from Wigglesworthia glossinidia brevipalpis.